The primary structure comprises 346 residues: NADH-ubiquinone oxidoreductase chain 2 (346 aa).

11 helical membrane-spanning segments follow: residues 1–21 (MNPH…TITI), 25–45 (HWVL…PLIS), 60–80 (FLTQ…NAWA), 95–115 (CLLL…HFWF), 124–144 (LMTA…LLLM), 149–169 (LNPA…GWMG), 178–195 (ILAF…IILV), 200–219 (LALL…FMAL), 242–262 (ATLM…GFMP), 274–294 (EMTP…FFYL), and 326–346 (AILA…HAIV).

It belongs to the complex I subunit 2 family.

It localises to the mitochondrion inner membrane. The catalysed reaction is a ubiquinone + NADH + 5 H(+)(in) = a ubiquinol + NAD(+) + 4 H(+)(out). Its function is as follows. Core subunit of the mitochondrial membrane respiratory chain NADH dehydrogenase (Complex I) that is believed to belong to the minimal assembly required for catalysis. Complex I functions in the transfer of electrons from NADH to the respiratory chain. The immediate electron acceptor for the enzyme is believed to be ubiquinone. This Mareca americana (American wigeon) protein is NADH-ubiquinone oxidoreductase chain 2 (MT-ND2).